A 143-amino-acid chain; its full sequence is Transcriptional regulator MraZ (143 aa).

SpoVT-AbrB domains are found at residues 5 to 47 and 76 to 119; these read EYQH…PKEE and AGEC…SRER.

It belongs to the MraZ family. Forms oligomers.

The protein resides in the cytoplasm. The protein localises to the nucleoid. This Heliobacterium modesticaldum (strain ATCC 51547 / Ice1) protein is Transcriptional regulator MraZ.